The primary structure comprises 192 residues: Peptidyl-tRNA hydrolase (192 aa).

The active-site Proton acceptor is H19. Residues Y64, N66, and N112 each coordinate tRNA.

This sequence belongs to the PTH family. In terms of assembly, monomer.

The protein resides in the cytoplasm. It carries out the reaction an N-acyl-L-alpha-aminoacyl-tRNA + H2O = an N-acyl-L-amino acid + a tRNA + H(+). Functionally, hydrolyzes ribosome-free peptidyl-tRNAs (with 1 or more amino acids incorporated), which drop off the ribosome during protein synthesis, or as a result of ribosome stalling. Catalyzes the release of premature peptidyl moieties from peptidyl-tRNA molecules trapped in stalled 50S ribosomal subunits, and thus maintains levels of free tRNAs and 50S ribosomes. This is Peptidyl-tRNA hydrolase from Acidiphilium cryptum (strain JF-5).